Here is a 1120-residue protein sequence, read N- to C-terminus: MKLETAYNYFEKLEKDERLQNYISQANSRYILYIANEPLENFPHYTVNLDEKCTHIAFSYLNCGWRFFLEKISDEATKCMEKASEILEYLYAYSDCEKLYKEYYRLVCSLAYYISAQYSKSFIILGKYNSDSYIGKITKLFLTRNFIELERQLEIKYLKNDEETSSENKDNIIYEKILSNAFLHIINFIRTGKMESLESSKDMVRDLITLADINNEPHMWWYFRLLYLVFEEYEDGSLWKVVPPLLDNDDISAKYIYANLYKKKPITEFFKSQRECLDGELLKNDGFVIGMPTSSGKTKVAEVTILKTLTKSPGALCIYIAPYRSLANEVEFSLSSMFEIMGYQVSQLYGGSQTSPLDRQLTKQANVIIVTPEKAKSMLRSNKDLKDRIQLVIIDEGHLVGFQPRYITGELLIEELKIVLKKNNGQLVLLSAVLPNISDFSLWIGEDDKAKRMSVWRPSSQRFGELSLARNTVNINWEGETPSYNKNFITPKLVKPERITKTGRKYAAKYFPADKKEGVAATATKMLDVGSVLIYVGRSNMVLSQARIVSKLFEEKGIEHEWRNKNDWLFVELACIEEYGEDSEILSLLKQGIVPHSSKLPTEVRQSIEKLMANDNPKIIIATSTLGQGVNIGVSTVIVSNVRLDESNTVKVNDFWNIAGRAGRAFTDTEGKILYAIDRNKSQWSIYNQIQMKEMYFKYRNIEKATSGLYLLLRYLFILSEEFEIEYSLFLELLAENRESIDEQKAVEFFSEADQFLELLDDTLISMDIMNEANVLENSSSWIDDVFRSSLAFIQAKQDQSFSEEKMIEILKARNSGVIKLAGEETKWHSIASSSVPLRASLVIEHRIDELLKYVRKYIDSDKSFEELLSLVMELDIFIDSLPISKIEGIEIGANFSEIREGWFSGTSIHILEKRHENVRSICNEYYSFHFPWIVNAIAQKIKLIDCQEESKVLEQISLFAEIGLNNNKSVKIYLAGIKSRNCATELSEKIGMDNDLVTPVKELLLEFFNLCVVKKEDCSEICFNWLKLLNDEKEAKEYVKVKRRSFQFNIPFDLHDNLLYIKKVQSEIWLCSFDYKIKIPVLKEKALFNECSDIPDIFLRKEKGDVWILDSHNPYIIFY.

The Helicase ATP-binding domain occupies D278–R452. M291–T298 serves as a coordination point for ATP. The DEAH box motif lies at D395–H398. A Helicase C-terminal domain is found at A521 to Y710.

The protein belongs to the helicase family.

Functionally, component of antiviral defense system Hachiman, composed of HamA and HamB. Expression of Hachiman in B.subtilis (strain BEST7003) confers resistance to phages phi105, phi29, phi3T, rho14, SBSphiJ, SpBeta and SPR. Probably a helicase. The sequence is that of Hachiman protein HamB from Bacillus cereus.